A 202-amino-acid chain; its full sequence is PITH domain-containing protein 1 (202 aa).

Residues 11–184 (SHGVDDGIEY…IVNTVYESKP (174 aa)) form the PITH domain.

It belongs to the PITHD1 family.

The polypeptide is PITH domain-containing protein 1 (Dictyostelium discoideum (Social amoeba)).